Here is a 235-residue protein sequence, read N- to C-terminus: Probable ribosomal RNA small subunit methyltransferase A (235 aa).

Residues histidine 9, leucine 11, glycine 34, glutamate 55, aspartate 78, and asparagine 93 each coordinate S-adenosyl-L-methionine.

Belongs to the class I-like SAM-binding methyltransferase superfamily. rRNA adenine N(6)-methyltransferase family. RsmA subfamily.

It localises to the cytoplasm. In terms of biological role, specifically dimethylates two adjacent adenosines in the loop of a conserved hairpin near the 3'-end of 16S rRNA in the 30S particle. May play a critical role in biogenesis of 30S subunits. The polypeptide is Probable ribosomal RNA small subunit methyltransferase A (Pyrobaculum islandicum (strain DSM 4184 / JCM 9189 / GEO3)).